The sequence spans 465 residues: VGFKAGVKDYKLTYYTPDYETKDTDILAAFRVTPQPGVPPEEAGAAVAAESSTGTWTTVWTDGLTSLDRYKGRCYHIESVAGEENQYIAYVAYPLDLFEEGSVTNMFTSIVGNVFGFKALRALRLEDLRIPPAYTKTFQGPPHGIQVERDKLNKYGRPLLGCTIKPKLGLSAKNYGRAVYECLRGGLDFTKDDENVNSQPFMRWRDRFLFCAEAIYKAQAETGEIKGHYLNATAGTCEEMIKRAVFARELGVPIVMHDYLTGGFTANTSLAHYCRDNGLLLHIHRAMHAVIDRQKNHGMHFRVLAKALRLSGGDHIHAGTVVGKLEGEREITLGFVVLLRDDFVEKDRSRGIYFTQDWVSIPGVLPVASGGIHVWHMPALTEIFGDDSVLQFGGGTLGHPWGNAPGAVANRVALEACVRARNEGRDLAREGNEIIREASKWSLELAAACEVWKEIKFDFEAMDTL.

An N6,N6,N6-trimethyllysine modification is found at Lys4. Substrate-binding residues include Asn113 and Thr163. Lys165 (proton acceptor) is an active-site residue. Lys167 contributes to the substrate binding site. Residues Lys191, Asp193, and Glu194 each coordinate Mg(2+). Lys191 is subject to N6-carboxylysine. His284 functions as the Proton acceptor in the catalytic mechanism. Substrate is bound by residues Arg285, His317, and Ser369.

This sequence belongs to the RuBisCO large chain family. Type I subfamily. In terms of assembly, heterohexadecamer of 8 large chains and 8 small chains; disulfide-linked. The disulfide link is formed within the large subunit homodimers. It depends on Mg(2+) as a cofactor. The disulfide bond which can form in the large chain dimeric partners within the hexadecamer appears to be associated with oxidative stress and protein turnover.

The protein localises to the plastid. It is found in the chloroplast. The enzyme catalyses 2 (2R)-3-phosphoglycerate + 2 H(+) = D-ribulose 1,5-bisphosphate + CO2 + H2O. It carries out the reaction D-ribulose 1,5-bisphosphate + O2 = 2-phosphoglycolate + (2R)-3-phosphoglycerate + 2 H(+). Functionally, ruBisCO catalyzes two reactions: the carboxylation of D-ribulose 1,5-bisphosphate, the primary event in carbon dioxide fixation, as well as the oxidative fragmentation of the pentose substrate in the photorespiration process. Both reactions occur simultaneously and in competition at the same active site. The sequence is that of Ribulose bisphosphate carboxylase large chain from Senega cruciata (Cross-leaved milkwort).